Consider the following 86-residue polypeptide: Small ribosomal subunit protein bS20 (86 aa).

Belongs to the bacterial ribosomal protein bS20 family.

In terms of biological role, binds directly to 16S ribosomal RNA. This is Small ribosomal subunit protein bS20 from Mycolicibacterium gilvum (strain PYR-GCK) (Mycobacterium gilvum (strain PYR-GCK)).